Consider the following 93-residue polypeptide: UPF0457 protein GTNG_2792 (93 aa).

The protein belongs to the UPF0457 family.

This Geobacillus thermodenitrificans (strain NG80-2) protein is UPF0457 protein GTNG_2792.